We begin with the raw amino-acid sequence, 152 residues long: Sulfur-rich protein (152 aa).

Over residues 1 to 11 (MSTTPIVSGVT) the composition is skewed to polar residues. Positions 1 to 21 (MSTTPIVSGVTSQNNSSENVS) are disordered. The segment covering 12–21 (SQNNSSENVS) has biased composition (low complexity). A run of 2 helical transmembrane segments spans residues 44–64 (VGLA…LFIL) and 73–93 (IYLA…ILSM).

It localises to the membrane. The protein is Sulfur-rich protein (srp) of Chlamydia muridarum (strain MoPn / Nigg).